We begin with the raw amino-acid sequence, 197 residues long: Elongation factor Ts (197 aa).

The tract at residues 81-84 (TDFV) is involved in Mg(2+) ion dislocation from EF-Tu.

Belongs to the EF-Ts family.

The protein localises to the cytoplasm. Functionally, associates with the EF-Tu.GDP complex and induces the exchange of GDP to GTP. It remains bound to the aminoacyl-tRNA.EF-Tu.GTP complex up to the GTP hydrolysis stage on the ribosome. In Sulfurihydrogenibium sp. (strain YO3AOP1), this protein is Elongation factor Ts.